The chain runs to 376 residues: RING-H2 finger protein ATL46 (376 aa).

A helical membrane pass occupies residues Val45 to Leu65. The segment at Cys143–Arg185 adopts an RING-type; atypical zinc-finger fold. Composition is skewed to basic and acidic residues over residues Arg296–Glu305 and Asp358–Arg376. Disordered regions lie at residues Arg296 to Thr320 and Phe341 to Arg376.

The protein belongs to the RING-type zinc finger family. ATL subfamily.

Its subcellular location is the membrane. It catalyses the reaction S-ubiquitinyl-[E2 ubiquitin-conjugating enzyme]-L-cysteine + [acceptor protein]-L-lysine = [E2 ubiquitin-conjugating enzyme]-L-cysteine + N(6)-ubiquitinyl-[acceptor protein]-L-lysine.. It participates in protein modification; protein ubiquitination. The sequence is that of RING-H2 finger protein ATL46 (ATL46) from Arabidopsis thaliana (Mouse-ear cress).